The chain runs to 206 residues: Pyridoxine/pyridoxamine 5'-phosphate oxidase (206 aa).

Residues arginine 53–lysine 58, tyrosine 68–threonine 69, lysine 75, and glutamine 97 each bind FMN. Lysine 58 lines the substrate pocket. Substrate-binding residues include tyrosine 115, arginine 119, and serine 123. Residues glutamine 132 to serine 133 and tryptophan 177 each bind FMN. Substrate is bound at residue arginine 183 to histidine 185. Arginine 187 is an FMN binding site.

It belongs to the pyridoxamine 5'-phosphate oxidase family. In terms of assembly, homodimer. FMN serves as cofactor.

It carries out the reaction pyridoxamine 5'-phosphate + O2 + H2O = pyridoxal 5'-phosphate + H2O2 + NH4(+). It catalyses the reaction pyridoxine 5'-phosphate + O2 = pyridoxal 5'-phosphate + H2O2. Its pathway is cofactor metabolism; pyridoxal 5'-phosphate salvage; pyridoxal 5'-phosphate from pyridoxamine 5'-phosphate: step 1/1. It participates in cofactor metabolism; pyridoxal 5'-phosphate salvage; pyridoxal 5'-phosphate from pyridoxine 5'-phosphate: step 1/1. In terms of biological role, catalyzes the oxidation of either pyridoxine 5'-phosphate (PNP) or pyridoxamine 5'-phosphate (PMP) into pyridoxal 5'-phosphate (PLP). The polypeptide is Pyridoxine/pyridoxamine 5'-phosphate oxidase (Rhizobium etli (strain ATCC 51251 / DSM 11541 / JCM 21823 / NBRC 15573 / CFN 42)).